The primary structure comprises 474 residues: Amidophosphoribosyltransferase (474 aa).

Positions 1-10 are excised as a propeptide; it reads MLGESEVRDK. C11 acts as the Nucleophile in catalysis. The region spanning 11–234 is the Glutamine amidotransferase type-2 domain; sequence CGIVGIYSQD…PGEILHLNRG (224 aa). C250 is a [4Fe-4S] cluster binding site. Mg(2+)-binding residues include S297, D359, and D360. The [4Fe-4S] cluster site is built by C396, C447, and C450.

This sequence in the C-terminal section; belongs to the purine/pyrimidine phosphoribosyltransferase family. It depends on Mg(2+) as a cofactor. [4Fe-4S] cluster is required as a cofactor.

The catalysed reaction is 5-phospho-beta-D-ribosylamine + L-glutamate + diphosphate = 5-phospho-alpha-D-ribose 1-diphosphate + L-glutamine + H2O. It functions in the pathway purine metabolism; IMP biosynthesis via de novo pathway; N(1)-(5-phospho-D-ribosyl)glycinamide from 5-phospho-alpha-D-ribose 1-diphosphate: step 1/2. Catalyzes the formation of phosphoribosylamine from phosphoribosylpyrophosphate (PRPP) and glutamine. The chain is Amidophosphoribosyltransferase from Methanothermobacter thermautotrophicus (strain ATCC 29096 / DSM 1053 / JCM 10044 / NBRC 100330 / Delta H) (Methanobacterium thermoautotrophicum).